The following is a 207-amino-acid chain: MAQGTLYIVSAPSGAGKSSLIQALLKTQPLYDTQVSVSHTTRAPRPGEVHGEHYFFVNHDEFKTMIGREAFLEHAEVFGNYYGTSRETIEQVLATGVDVFLDIDWQGAQQIREKMPQARSIFILPPSKIELDRRLRGRGQDSEEVIAKRMAQAVAEMSHYAEYDYLIVNDDFDTALSDLKTIIRAERLRMSRQKQRHNALISKLLAD.

The Guanylate kinase-like domain maps to 4 to 184 (GTLYIVSAPS…ALSDLKTIIR (181 aa)). Residue 11-18 (APSGAGKS) participates in ATP binding.

It belongs to the guanylate kinase family.

Its subcellular location is the cytoplasm. The enzyme catalyses GMP + ATP = GDP + ADP. In terms of biological role, essential for recycling GMP and indirectly, cGMP. This Salmonella typhimurium (strain LT2 / SGSC1412 / ATCC 700720) protein is Guanylate kinase (gmk).